The sequence spans 286 residues: Apoptosis inhibitor 1 (286 aa).

2 BIR repeats span residues 29–96 and 131–199; these read LIER…CAYA and LQSR…CYFV. The Zn(2+) site is built by cysteine 169, cysteine 172, histidine 189, and cysteine 196. The RING-type zinc-finger motif lies at 238–274; the sequence is CKVCLERQRDAVLMPCRHFCVCVQCYFGLDQKCPTCR.

Functionally, acts by blocking cellular apoptosis early in infection. Later, stimulates caspase-3-like protease activity and induces apoptosis, probably to favor the release of occluded virions. This is Apoptosis inhibitor 1 (IAP1) from Lepidoptera (butterflies and moths).